Consider the following 86-residue polypeptide: Small ribosomal subunit protein bS20 (86 aa).

Residues 1 to 26 form a disordered region; that stretch reads MANIKSAKKRALQSEKSRKHNASRRT.

It belongs to the bacterial ribosomal protein bS20 family.

Functionally, binds directly to 16S ribosomal RNA. This chain is Small ribosomal subunit protein bS20, found in Psychromonas ingrahamii (strain DSM 17664 / CCUG 51855 / 37).